The primary structure comprises 860 residues: Leucine--tRNA ligase (860 aa).

Positions 42–52 (PYPSGRLHMGH) match the 'HIGH' region motif. Positions 619 to 623 (KMSKS) match the 'KMSKS' region motif. Lysine 622 is an ATP binding site.

The protein belongs to the class-I aminoacyl-tRNA synthetase family.

The protein localises to the cytoplasm. The catalysed reaction is tRNA(Leu) + L-leucine + ATP = L-leucyl-tRNA(Leu) + AMP + diphosphate. This Shigella boydii serotype 18 (strain CDC 3083-94 / BS512) protein is Leucine--tRNA ligase.